The sequence spans 376 residues: MVLESTMVCVDNSEYMRNGDFLPTRLQAQQDAVNIVCHSKTRSNPENNVGLITLANDCEVLTTLTPDTGRILSKLHTVQPKGKITFCTGIRVAHLALKHRQGKNHKMRIIAFVGSPVEDNEKDLVKLAKRLKKEKVNVDIINFGEEEVNTEKLTAFVNTLNGKDGTGSHLVTVPPGPSLADALISSPILAGEGGAMLGLGASDFEFGVDPSADPELALALRVSMEEQRQRQEEEARRAAAASAAEAGIATPGTEDSDDALLKMTINQQEFGRPGLPDLSSMTEEEQIAYAMQMSLQGTEFSQESADMDASSAMDTSDPVKEEDDYDVMQDPEFLQSVLENLPGVDPNNAAIRSVMGALASQATKDGKNDKKEEEKK.

The VWFA domain occupies 5 to 188 (STMVCVDNSE…LADALISSPI (184 aa)). K122 participates in a covalent cross-link: Glycyl lysine isopeptide (Lys-Gly) (interchain with G-Cter in SUMO2). Residues 197 to 262 (LGLGASDFEF…TEDSDDALLK (66 aa)) form an interaction with UBQLN1 region. The 20-residue stretch at 211–230 (SADPELALALRVSMEEQRQR) folds into the UIM 1 domain. Basic and acidic residues predominate over residues 224–237 (MEEQRQRQEEEARR). The segment at 224–257 (MEEQRQRQEEEARRAAAASAAEAGIATPGTEDSD) is disordered. A phosphothreonine mark is found at T250 and T253. Phosphoserine occurs at positions 256 and 259. Residues 282-301 (TEEEQIAYAMQMSLQGTEFS) enclose the UIM 2 domain. Residues 355-376 (MGALASQATKDGKNDKKEEEKK) form a disordered region. Residue S360 is modified to Phosphoserine. A compositionally biased stretch (basic and acidic residues) spans 364–376 (KDGKNDKKEEEKK).

Belongs to the proteasome subunit S5A family. As to quaternary structure, component of the 19S proteasome regulatory particle complex. The 26S proteasome consists of a 20S core particle (CP) and two 19S regulatory subunits (RP). The regulatory particle is made of a lid composed of 9 subunits, a base containing 6 ATPases and few additional components including PSMD4. Interacts with NUB1. Interacts with SQSTM1. Interacts with UBQLN4. Interacts with UBE3A. Interacts with UBQLN1 (via ubiquitin-like domain). Interacts with DDI2. As to expression, isoform Rpn10A is ubiquitous whereas isoform Rpn10E is mostly expressed in the embryonic brain.

Functionally, component of the 26S proteasome, a multiprotein complex involved in the ATP-dependent degradation of ubiquitinated proteins. This complex plays a key role in the maintenance of protein homeostasis by removing misfolded or damaged proteins, which could impair cellular functions, and by removing proteins whose functions are no longer required. Therefore, the proteasome participates in numerous cellular processes, including cell cycle progression, apoptosis, or DNA damage repair. PSMD4 acts as an ubiquitin receptor subunit through ubiquitin-interacting motifs and selects ubiquitin-conjugates for destruction. Displays a preferred selectivity for longer polyubiquitin chains. In Mus musculus (Mouse), this protein is 26S proteasome non-ATPase regulatory subunit 4 (Psmd4).